The following is a 509-amino-acid chain: Maturase K (509 aa).

This sequence belongs to the intron maturase 2 family. MatK subfamily.

Its subcellular location is the plastid. The protein localises to the chloroplast. In terms of biological role, usually encoded in the trnK tRNA gene intron. Probably assists in splicing its own and other chloroplast group II introns. The sequence is that of Maturase K from Abies firma (Momi fir).